The following is a 90-amino-acid chain: Small ribosomal subunit protein uS15 (90 aa).

This sequence belongs to the universal ribosomal protein uS15 family. In terms of assembly, part of the 30S ribosomal subunit. Forms a bridge to the 50S subunit in the 70S ribosome, contacting the 23S rRNA.

One of the primary rRNA binding proteins, it binds directly to 16S rRNA where it helps nucleate assembly of the platform of the 30S subunit by binding and bridging several RNA helices of the 16S rRNA. Its function is as follows. Forms an intersubunit bridge (bridge B4) with the 23S rRNA of the 50S subunit in the ribosome. The chain is Small ribosomal subunit protein uS15 from Wolbachia sp. subsp. Drosophila simulans (strain wRi).